A 260-amino-acid chain; its full sequence is Factor V activator RVV-V gamma (260 aa).

A signal peptide spans 1-18; it reads MVLIKVLANLLVLQLSYA. Positions 19–24 are excised as a propeptide; sequence QKSSEL. The Peptidase S1 domain maps to 25-251; it reads VVGGDECNIN…YNNWIQSIIA (227 aa). Disulfide bonds link Cys-31/Cys-165, Cys-52/Cys-68, Cys-100/Cys-258, Cys-144/Cys-212, Cys-176/Cys-191, and Cys-202/Cys-227. Active-site charge relay system residues include His-67 and Asp-112. Ser-206 (charge relay system) is an active-site residue. Asn-253 is a glycosylation site (N-linked (GlcNAc...) asparagine).

This sequence belongs to the peptidase S1 family. Snake venom subfamily. Monomer. Expressed by the venom gland.

It localises to the secreted. The enzyme catalyses Fully activates human clotting factor V by a single cleavage at the 1545-Trp-Tyr-Leu-Arg-|-Ser-Asn-Asn-Gly-1552 bond. Cattle, but not rabbit, factor V is cleaved, and no other proteins of the clotting system are attacked. Esterase activity is observed on Bz-Arg-OEt and Tos-Arg-OMe, and amidase activity on Phe-pipecolyl-Arg-NHPhNO2.. Its function is as follows. Venom serine protease that selectively activates factor V (F5) in a calcium-independent manner. It cleaves the Arg(1545)-Ser(1546) linkage in the human factor V molecule. Induces the coagulation of mammalian plasma. The sequence is that of Factor V activator RVV-V gamma from Daboia siamensis (Eastern Russel's viper).